Consider the following 107-residue polypeptide: Stellacyanin (107 aa).

In terms of domain architecture, Phytocyanin spans 1–105 (TVYTVGDSAG…GQKVHINVTV (105 aa)). A glycan (N-linked (GlcNAc...) asparagine) is linked at Asn-28. His-46 contacts Cu cation. Cys-59 and Cys-93 are oxidised to a cystine. N-linked (GlcNAc...) asparagine glycosylation occurs at Asn-60. The Cu cation site is built by Cys-87, His-92, and Gln-97. Residue Asn-102 is glycosylated (N-linked (GlcNAc...) asparagine).

In Toxicodendron vernicifluum (Japanese lacquer tree), this protein is Stellacyanin.